Reading from the N-terminus, the 609-residue chain is Oxidoreductase tpcJ (609 aa).

Positions 1–16 are cleaved as a signal peptide; it reads MITVIKWLVSGCCALA. Residues Asn63, Asn107, Asn113, Asn240, Asn283, Asn471, and Asn601 are each glycosylated (N-linked (GlcNAc...) asparagine). Plastocyanin-like domains follow at residues 66–186, 196–351, and 429–567; these read VSQQ…HGPS, PWLL…RYDE, and VDWK…EQPK.

This sequence belongs to the multicopper oxidase family. In terms of tissue distribution, specifically expressed in conidia.

It functions in the pathway secondary metabolite biosynthesis. Its function is as follows. Oxidoreductase; part of the gene cluster that mediates the biosynthesis of trypacidin, a mycotoxin with antiprotozoal activity and that plays a role in the infection process. The pathway begins with the synthesis of atrochrysone thioester by the polyketide synthase (PKS) tpcC. The atrochrysone carboxyl ACP thioesterase tpcB then breaks the thioester bond and releases the atrochrysone carboxylic acid from tpcC. The decarboxylase tpcK converts atrochrysone carboxylic acid to atrochrysone which is further reduced into emodin anthrone. The next step is performed by the emodin anthrone oxygenase tpcL that catalyzes the oxidation of emodinanthrone to emodin. Emodin O-methyltransferase encoded by tpcA catalyzes methylation of the 8-hydroxy group of emodin to form questin. Ring cleavage of questin by questin oxidase tpcI leads to desmethylsulochrin via several intermediates including questin epoxide. Another methylation step catalyzed by tpcM leads to the formation of sulochrin which is further converted to monomethylsulfochrin by tpcH. Finally, the tpcJ catalyzes the conversion of monomethylsulfochrin to trypacidin. Trypacidin is toxic for human pulmonary and bronchial epithelial cells by initiating the intracellular formation of nitric oxide (NO) and hydrogen peroxide (H(2)O(2)), thus triggering host necrotic cell death. The trypacidin pathway is also able to produce endocrocin via a distinct route from the endocrocin Enc pathway. This chain is Oxidoreductase tpcJ, found in Aspergillus fumigatus (strain ATCC MYA-4609 / CBS 101355 / FGSC A1100 / Af293) (Neosartorya fumigata).